A 467-amino-acid chain; its full sequence is MTCRTRFAPSPTGYLHIGGARTALYCWLEARRRNGQFLLRIEDTDRERSTQAAIDAILHAMDWLGLDYDEPPVYQTQRIERYNQVAARLLAEGKAYYAYDSKDTLNAMREAALRTGEKPRYNGAAREANLPYRDDPNRVIRFKNPHTGTVAFDDLIKGRIQISNSELDDMVILRPDGYPTYNFAVVVDDWDMNITEVIRGDDHINNTPRQINLYHALGAPLPTFAHLPMILDEQGAKLSKRTGAADVMQYRDSGYLPHALINYLVRLGWSHGDQELFNRQALIDLFQINDVNSKAARLDMAKLGWVNQHYLKTDDPATLAPPLVWHLEQRGIDVSAGPAPTDVILALRERVQTLKEMAEKAEIWYCPLQRYDEIAVAKHLKPGAETALLHARTLLAALPAWTVDNVDTALRTTATTLEIGMGKVAQPLRVAITGTQVSPDIAYTVYLTGRNEALKRIDAALIKISTA.

The short motif at 9–19 is the 'HIGH' region element; that stretch reads PSPTGYLHIGG. Residues 237–241 carry the 'KMSKS' region motif; the sequence is KLSKR. Lys-240 contacts ATP.

This sequence belongs to the class-I aminoacyl-tRNA synthetase family. Glutamate--tRNA ligase type 1 subfamily. In terms of assembly, monomer.

Its subcellular location is the cytoplasm. It carries out the reaction tRNA(Glu) + L-glutamate + ATP = L-glutamyl-tRNA(Glu) + AMP + diphosphate. In terms of biological role, catalyzes the attachment of glutamate to tRNA(Glu) in a two-step reaction: glutamate is first activated by ATP to form Glu-AMP and then transferred to the acceptor end of tRNA(Glu). This is Glutamate--tRNA ligase from Xylella fastidiosa (strain M23).